The following is a 401-amino-acid chain: Imidazolonepropionase (401 aa).

Positions 70 and 72 each coordinate Fe(3+). The Zn(2+) site is built by His70 and His72. Residues Arg79, Tyr142, and His175 each coordinate 4-imidazolone-5-propanoate. Tyr142 contacts N-formimidoyl-L-glutamate. A Fe(3+)-binding site is contributed by His238. Residue His238 participates in Zn(2+) binding. Gln241 is a binding site for 4-imidazolone-5-propanoate. Asp313 contributes to the Fe(3+) binding site. Asp313 lines the Zn(2+) pocket. The N-formimidoyl-L-glutamate site is built by Asn315 and Gly317. 4-imidazolone-5-propanoate is bound at residue Thr318.

It belongs to the metallo-dependent hydrolases superfamily. HutI family. The cofactor is Zn(2+). Requires Fe(3+) as cofactor.

It is found in the cytoplasm. It catalyses the reaction 4-imidazolone-5-propanoate + H2O = N-formimidoyl-L-glutamate. It functions in the pathway amino-acid degradation; L-histidine degradation into L-glutamate; N-formimidoyl-L-glutamate from L-histidine: step 3/3. In terms of biological role, catalyzes the hydrolytic cleavage of the carbon-nitrogen bond in imidazolone-5-propanoate to yield N-formimidoyl-L-glutamate. It is the third step in the universal histidine degradation pathway. This Xanthomonas axonopodis pv. citri (strain 306) protein is Imidazolonepropionase.